The sequence spans 234 residues: uncharacterized protein (234 aa).

The helical transmembrane segment at 13–32 (KSINYYIFFFQYTLVYNTIQ) threads the bilayer. 2 disordered regions span residues 102–130 (HSKT…SSNS) and 159–185 (ESDS…SEYE). A compositionally biased stretch (low complexity) spans 103 to 130 (SKTTSLPFSSSSPQSSSSSSSSSSSSNS). A compositionally biased stretch (acidic residues) spans 167-185 (EFDSESNSDFDSESESEYE).

Its subcellular location is the membrane. This is an uncharacterized protein from Dictyostelium discoideum (Social amoeba).